Here is a 258-residue protein sequence, read N- to C-terminus: uncharacterized protein (258 aa).

N-linked (GlcNAc...) asparagine; by host glycosylation is found at Asn-60, Asn-104, and Asn-113. Low complexity predominate over residues 147–156 (TTRKPGQKTT). Residues 147–183 (TTRKPGQKTTLSRLKTTPNKHTQHKRSTRRTSPRDYN) are disordered. The span at 157–166 (LSRLKTTPNK) shows a compositional bias: polar residues. Positions 167 to 177 (HTQHKRSTRRT) are enriched in basic residues. Residue Asn-183 is glycosylated (N-linked (GlcNAc...) asparagine; by host). Residues 208 to 228 (AHSAWILIVIIIIIVVILFFF) traverse the membrane as a helical segment.

It belongs to the RL11 family.

Its subcellular location is the membrane. This is an uncharacterized protein from Human cytomegalovirus (strain AD169) (HHV-5).